We begin with the raw amino-acid sequence, 1461 residues long: Neogenin (1461 aa).

The first 33 residues, 1–33, serve as a signal peptide directing secretion; the sequence is MAAERGARRLLSTPSFWLYCLLLLGRRAPGAAA. At 34 to 1105 the chain is on the extracellular side; that stretch reads ARSGSAPQSP…PTSPLDSNML (1072 aa). Ig-like C2-type domains follow at residues 52-141, 152-238, 243-336, and 341-426; these read PFYF…TIIS, PRFT…VELK, PEVI…AELT, and PEFL…AQLI. The N-linked (GlcNAc...) asparagine glycan is linked to Asn73. Intrachain disulfides connect Cys74–Cys129, Cys173–Cys221, and Cys270–Cys320. Asn210 carries an N-linked (GlcNAc...) asparagine glycan. Residue Asn326 is glycosylated (N-linked (GlcNAc...) asparagine). Cys362 and Cys410 are oxidised to a cystine. Fibronectin type-III domains lie at 441-535, 541-631, 636-731, 741-831, 856-952, and 957-1054; these read APRD…TQPE, PAPN…TLSD, APQN…TFES, VPSS…RPHT, PPVG…TFEL, and PPKD…TPKA. N-linked (GlcNAc...) asparagine glycans are attached at residues Asn470 and Asn489. Asn639 and Asn715 each carry an N-linked (GlcNAc...) asparagine glycan. N-linked (GlcNAc...) asparagine glycosylation occurs at Asn909. Positions 1041-1097 are disordered; sequence GPMSEAVQFRTPKADSSDKMPNDQASGSGGKGSRLPDLGSDYKPPMSGSNSPHGSPT. The segment covering 1052-1061 has biased composition (basic and acidic residues); that stretch reads PKADSSDKMP. Positions 1087–1097 are enriched in polar residues; it reads SGSNSPHGSPT. Residues 1106 to 1126 form a helical membrane-spanning segment; that stretch reads LVIIVSVGVITIVVVVIIAVF. Residues 1127 to 1461 lie on the Cytoplasmic side of the membrane; that stretch reads CTRRTTSHQK…MKDLNAITTA (335 aa). Disordered stretches follow at residues 1138-1160, 1174-1206, 1235-1276, and 1289-1381; these read KRAA…DVKP, PIDK…SMDS, PKMM…PARS, and TSMS…ALPS. Ser1178 and Ser1194 each carry phosphoserine. Residues 1191–1206 show a composition bias toward polar residues; that stretch reads PRNSQDITPVDNSMDS. Position 1198 is a phosphothreonine (Thr1198). Polar residues-rich tracts occupy residues 1289–1322 and 1330–1349; these read TSMS…TCCT and ATSS…QSLP. Positions 1366–1375 are enriched in pro residues; it reads AIPPPGPPTY. Residue Ser1401 is modified to Phosphoserine. Thr1404 is subject to Phosphothreonine. A phosphoserine mark is found at Ser1432, Ser1434, and Ser1435.

Belongs to the immunoglobulin superfamily. DCC family. As to quaternary structure, interacts with MYO10. Interacts with RGMA and RGMB. Interacts with BMP2, BMP4, BMP6, and BMP7. As to expression, widely expressed and also in cancer cell lines.

The protein resides in the cell membrane. Its function is as follows. Multi-functional cell surface receptor regulating cell adhesion in many diverse developmental processes, including neural tube and mammary gland formation, myogenesis and angiogenesis. Receptor for members of the BMP, netrin, and repulsive guidance molecule (RGM) families. Netrin-Neogenin interactions result in a chemoattractive axon guidance response and cell-cell adhesion, the interaction between NEO1/Neogenin and RGMa and RGMb induces a chemorepulsive response. The chain is Neogenin (NEO1) from Homo sapiens (Human).